Consider the following 356-residue polypeptide: MAANVLIMAGGTGGHVFPALACAREFQTRGYAVHWLGTPRGIENELVPAAGLPLHLIQVSGLRGKGLASLIKAPLQLVRSLFQARRIIRELRPVCVLGLGGYVTGPGGLAAKLAGVPLVIHEQNAVAGTANRSLVPLASRVCEAFPDTFSSSAKRRTTGNPVREELFLETPRDSLAHRRPRLLVLGGSLGAEPLNKLLPAALAQVPAELRPEVFHQAGKQHAEITEQRYAEAGVEAEVAPFIKDMARAYAWADLVICRAGALTVCELAAAGLPSFLVPLPHAIDDHQTRNAEYLANEGAAVLLPQAKTDAAALAAQLTEVMMQPEKLKAMGTTARRLARPDATRSVVDICLEVAHG.

UDP-N-acetyl-alpha-D-glucosamine contacts are provided by residues 12–14 (TGG), asparagine 124, arginine 163, serine 188, isoleucine 242, 261–266 (ALTVCE), and glutamine 287.

It belongs to the glycosyltransferase 28 family. MurG subfamily.

The protein localises to the cell inner membrane. It catalyses the reaction di-trans,octa-cis-undecaprenyl diphospho-N-acetyl-alpha-D-muramoyl-L-alanyl-D-glutamyl-meso-2,6-diaminopimeloyl-D-alanyl-D-alanine + UDP-N-acetyl-alpha-D-glucosamine = di-trans,octa-cis-undecaprenyl diphospho-[N-acetyl-alpha-D-glucosaminyl-(1-&gt;4)]-N-acetyl-alpha-D-muramoyl-L-alanyl-D-glutamyl-meso-2,6-diaminopimeloyl-D-alanyl-D-alanine + UDP + H(+). It functions in the pathway cell wall biogenesis; peptidoglycan biosynthesis. Its function is as follows. Cell wall formation. Catalyzes the transfer of a GlcNAc subunit on undecaprenyl-pyrophosphoryl-MurNAc-pentapeptide (lipid intermediate I) to form undecaprenyl-pyrophosphoryl-MurNAc-(pentapeptide)GlcNAc (lipid intermediate II). The sequence is that of UDP-N-acetylglucosamine--N-acetylmuramyl-(pentapeptide) pyrophosphoryl-undecaprenol N-acetylglucosamine transferase from Stutzerimonas stutzeri (strain A1501) (Pseudomonas stutzeri).